We begin with the raw amino-acid sequence, 224 residues long: Cytosolic-abundant heat soluble protein 77580 (224 aa).

Low complexity predominate over residues 1-13 (MSNYQQESSYQYS). The segment at 1–38 (MSNYQQESSYQYSDRSNNGQQQEQQEKKEVEHSSYTHT) is disordered. Positions 24–38 (QQEKKEVEHSSYTHT) are enriched in basic and acidic residues. The stretch at 83 to 191 (VIDTEAETEE…KRVLERSKFH (109 aa)) forms a coiled coil. CAHS motif stretches follow at residues 122–140 (YRKQ…LEKQ) and 159–177 (QKRQ…LERE). Positions 200–215 (AAAGSTHSGSSSVAVS) are enriched in low complexity. The segment at 200–224 (AAAGSTHSGSSSVAVSESEKFQTNN) is disordered.

It belongs to the Cytosolic-abundant heat soluble protein (CAHS) family.

The protein resides in the cytoplasm. CAHS proteins are cytosolic heat soluble proteins that seem to contribute to the anhydrobiosis in tardigrades, but their specific mechanisms are yet to be identified. It is possible that protection during anhydrobiosis might occur via the stabilization of vitrifying small molecules such as sugars, but not via the direct glass transition of CAHS proteins themselves. In Hypsibius exemplaris (Freshwater tardigrade), this protein is Cytosolic-abundant heat soluble protein 77580.